A 60-amino-acid polypeptide reads, in one-letter code: Large ribosomal subunit protein bL32 (60 aa).

Positions 1–20 (MAKPARHTSKAKRNKRRTHY) are enriched in basic residues. The disordered stretch occupies residues 1-22 (MAKPARHTSKAKRNKRRTHYKL).

It belongs to the bacterial ribosomal protein bL32 family.

This is Large ribosomal subunit protein bL32 from Streptococcus agalactiae serotype V (strain ATCC BAA-611 / 2603 V/R).